The sequence spans 242 residues: 1-(5-phosphoribosyl)-5-[(5-phosphoribosylamino)methylideneamino] imidazole-4-carboxamide isomerase (242 aa).

Catalysis depends on Asp-8, which acts as the Proton acceptor. The active-site Proton donor is the Asp-129.

The protein belongs to the HisA/HisF family.

Its subcellular location is the cytoplasm. It catalyses the reaction 1-(5-phospho-beta-D-ribosyl)-5-[(5-phospho-beta-D-ribosylamino)methylideneamino]imidazole-4-carboxamide = 5-[(5-phospho-1-deoxy-D-ribulos-1-ylimino)methylamino]-1-(5-phospho-beta-D-ribosyl)imidazole-4-carboxamide. It participates in amino-acid biosynthesis; L-histidine biosynthesis; L-histidine from 5-phospho-alpha-D-ribose 1-diphosphate: step 4/9. This Clostridium botulinum (strain Okra / Type B1) protein is 1-(5-phosphoribosyl)-5-[(5-phosphoribosylamino)methylideneamino] imidazole-4-carboxamide isomerase.